We begin with the raw amino-acid sequence, 435 residues long: Glutamyl-tRNA reductase (435 aa).

Substrate-binding positions include 50-53 (TCNR), S110, 115-117 (ESQ), and Q121. C51 serves as the catalytic Nucleophile. 191 to 196 (GAGDMG) provides a ligand contact to NADP(+).

It belongs to the glutamyl-tRNA reductase family. Homodimer.

It catalyses the reaction (S)-4-amino-5-oxopentanoate + tRNA(Glu) + NADP(+) = L-glutamyl-tRNA(Glu) + NADPH + H(+). It participates in porphyrin-containing compound metabolism; protoporphyrin-IX biosynthesis; 5-aminolevulinate from L-glutamyl-tRNA(Glu): step 1/2. Functionally, catalyzes the NADPH-dependent reduction of glutamyl-tRNA(Glu) to glutamate 1-semialdehyde (GSA). This chain is Glutamyl-tRNA reductase, found in Sulfurovum sp. (strain NBC37-1).